The sequence spans 496 residues: Glycogen synthase (496 aa).

Lys15 is an ADP-alpha-D-glucose binding site.

It belongs to the glycosyltransferase 1 family. Bacterial/plant glycogen synthase subfamily.

It carries out the reaction [(1-&gt;4)-alpha-D-glucosyl](n) + ADP-alpha-D-glucose = [(1-&gt;4)-alpha-D-glucosyl](n+1) + ADP + H(+). The protein operates within glycan biosynthesis; glycogen biosynthesis. Synthesizes alpha-1,4-glucan chains using ADP-glucose. In Natranaerobius thermophilus (strain ATCC BAA-1301 / DSM 18059 / JW/NM-WN-LF), this protein is Glycogen synthase.